The following is a 668-amino-acid chain: Transketolase 2 (668 aa).

A substrate-binding site is contributed by H26. Thiamine diphosphate contacts are provided by residues H66 and G114–L116. D155 serves as a coordination point for Mg(2+). 2 residues coordinate thiamine diphosphate: G156 and N185. Mg(2+) is bound by residues N185 and I187. Substrate-binding residues include H261, R358, and S385. Position 261 (H261) interacts with thiamine diphosphate. E413 (proton donor) is an active-site residue. F439 contributes to the thiamine diphosphate binding site. Residues H463, D471, and R522 each contribute to the substrate site.

The protein belongs to the transketolase family. Homodimer. It depends on Mg(2+) as a cofactor. Ca(2+) serves as cofactor. The cofactor is Mn(2+). Co(2+) is required as a cofactor. Requires thiamine diphosphate as cofactor.

The enzyme catalyses D-sedoheptulose 7-phosphate + D-glyceraldehyde 3-phosphate = aldehydo-D-ribose 5-phosphate + D-xylulose 5-phosphate. Functionally, catalyzes the transfer of a two-carbon ketol group from a ketose donor to an aldose acceptor, via a covalent intermediate with the cofactor thiamine pyrophosphate. The protein is Transketolase 2 (tktB) of Pasteurella multocida (strain Pm70).